The primary structure comprises 146 residues: Leghemoglobin Lb120-29 (146 aa).

The Globin domain occupies 2–146 (GFTDKQEALV…LASAIKKAMS (145 aa)). 2 positions are modified to nitrated tyrosine: Tyr24 and Tyr29. Residue Ser44 coordinates heme b. Position 44 is a phosphoserine (Ser44). His61 provides a ligand contact to O2. Residues Lys64, His93, and Lys96 each contribute to the heme b site. The residue at position 134 (Tyr134) is a Nitrated tyrosine.

It belongs to the plant globin family. In terms of assembly, monomer. Nitrated in effective nodules and particularly in hypoxic conditions; this mechanism may play a protective role in the symbiosis by buffering toxic peroxynitrite NO(2)(-). Nitration level decrease during nodule senescence. Post-translationally, phosphorylation at Ser-44 disrupts the molecular environment of its porphyrin ring oxygen binding pocket, thus leading to a reduced oxygen consumption and to the delivery of oxygen O(2) to symbiosomes. Root nodules.

It localises to the cytoplasm. The protein resides in the cytosol. The protein localises to the nucleus. Functionally, leghemoglobin that reversibly binds oxygen O(2) through a pentacoordinated heme iron. In root nodules, facilitates the diffusion of oxygen to the bacteroids while preventing the bacterial nitrogenase from being inactivated by buffering dioxygen, nitric oxide and carbon monoxide, and promoting the formation of reactive oxygen species (ROS, e.g. H(2)O(2)). This role is essential for symbiotic nitrogen fixation (SNF). This Pisum sativum (Garden pea) protein is Leghemoglobin Lb120-29.